Reading from the N-terminus, the 119-residue chain is 5-hydroxyisourate hydrolase (119 aa).

Positions 10, 48, and 116 each coordinate substrate.

It belongs to the transthyretin family. 5-hydroxyisourate hydrolase subfamily. As to quaternary structure, homotetramer.

The catalysed reaction is 5-hydroxyisourate + H2O = 5-hydroxy-2-oxo-4-ureido-2,5-dihydro-1H-imidazole-5-carboxylate + H(+). It functions in the pathway purine metabolism; urate degradation; (S)-allantoin from urate: step 2/3. Its function is as follows. Catalyzes the hydrolysis of 5-hydroxyisourate (HIU) to 2-oxo-4-hydroxy-4-carboxy-5-ureidoimidazoline (OHCU). The polypeptide is 5-hydroxyisourate hydrolase (Deinococcus radiodurans (strain ATCC 13939 / DSM 20539 / JCM 16871 / CCUG 27074 / LMG 4051 / NBRC 15346 / NCIMB 9279 / VKM B-1422 / R1)).